Consider the following 279-residue polypeptide: Tryptophan synthase alpha chain (279 aa).

Catalysis depends on proton acceptor residues Glu50 and Asp61.

Belongs to the TrpA family. As to quaternary structure, tetramer of two alpha and two beta chains.

The enzyme catalyses (1S,2R)-1-C-(indol-3-yl)glycerol 3-phosphate + L-serine = D-glyceraldehyde 3-phosphate + L-tryptophan + H2O. The protein operates within amino-acid biosynthesis; L-tryptophan biosynthesis; L-tryptophan from chorismate: step 5/5. In terms of biological role, the alpha subunit is responsible for the aldol cleavage of indoleglycerol phosphate to indole and glyceraldehyde 3-phosphate. This chain is Tryptophan synthase alpha chain, found in Brucella anthropi (strain ATCC 49188 / DSM 6882 / CCUG 24695 / JCM 21032 / LMG 3331 / NBRC 15819 / NCTC 12168 / Alc 37) (Ochrobactrum anthropi).